Here is a 201-residue protein sequence, read N- to C-terminus: Ribonuclease HII (201 aa).

The RNase H type-2 domain occupies 12–201 (DLVAGVDEVG…VRELLDASVE (190 aa)). 3 residues coordinate a divalent metal cation: D18, E19, and D110.

It belongs to the RNase HII family. The cofactor is Mn(2+). Mg(2+) serves as cofactor.

The protein localises to the cytoplasm. The enzyme catalyses Endonucleolytic cleavage to 5'-phosphomonoester.. Its function is as follows. Endonuclease that specifically degrades the RNA of RNA-DNA hybrids. The chain is Ribonuclease HII from Pseudomonas paraeruginosa (strain DSM 24068 / PA7) (Pseudomonas aeruginosa (strain PA7)).